The following is a 119-amino-acid chain: Large ribosomal subunit protein bL20 (119 aa).

This sequence belongs to the bacterial ribosomal protein bL20 family. In terms of assembly, part of the 50S ribosomal subunit.

Binds directly to 23S ribosomal RNA and is necessary for the in vitro assembly process of the 50S ribosomal subunit. It is not involved in the protein synthesizing functions of that subunit. This is Large ribosomal subunit protein bL20 (rplT) from Bacillus subtilis (strain 168).